Consider the following 610-residue polypeptide: Glutamine--fructose-6-phosphate aminotransferase [isomerizing] (610 aa).

The Nucleophile; for GATase activity role is filled by cysteine 2. Positions 2 to 218 constitute a Glutamine amidotransferase type-2 domain; the sequence is CGIVGAVAQR…EGDVAEMTRR (217 aa). 2 consecutive SIS domains span residues 286–426 and 459–600; these read AAEI…QQQR and LAED…VDQP. The active-site For Fru-6P isomerization activity is the lysine 605.

As to quaternary structure, homodimer.

Its subcellular location is the cytoplasm. It catalyses the reaction D-fructose 6-phosphate + L-glutamine = D-glucosamine 6-phosphate + L-glutamate. Catalyzes the first step in hexosamine metabolism, converting fructose-6P into glucosamine-6P using glutamine as a nitrogen source. The polypeptide is Glutamine--fructose-6-phosphate aminotransferase [isomerizing] (Vibrio cholerae serotype O1 (strain ATCC 39315 / El Tor Inaba N16961)).